Reading from the N-terminus, the 629-residue chain is Myotonin-protein kinase (629 aa).

Topologically, residues 1 to 590 (MSAEVRLRRL…PRPGLSEALS (590 aa)) are cytoplasmic. The Protein kinase domain occupies 71 to 339 (FEILKVIGRG…AGDFRTHPFF (269 aa)). Residues 77–85 (IGRGAFSEV) and Lys-100 contribute to the ATP site. Asp-195 acts as the Proton acceptor in catalysis. Phosphoserine; by autocatalysis occurs at positions 216 and 228. Position 234 is a phosphothreonine; by autocatalysis (Thr-234). One can recognise an AGC-kinase C-terminal domain in the interval 340-415 (FGLDWDGLRD…SCMALRDSEV (76 aa)). A coiled-coil region spans residues 457–536 (VPAAEAEAEV…LQAEGATAVT (80 aa)). Residues 591–611 (LLLFAVVLSRAAALGCIGLVA) traverse the membrane as a helical; Anchor for type IV membrane protein segment. Over 612–629 (HAGQLTAVWRRPGAARAP) the chain is Lumenal.

It belongs to the protein kinase superfamily. AGC Ser/Thr protein kinase family. DMPK subfamily. As to quaternary structure, homodimer; homodimerization stimulates the kinase activity. Interacts with HSPB2; may enhance DMPK kinase activity. Interacts with PLN; phosphorylates PLN. May interact with RAC1; may regulate DMPK kinase activity. Interacts with LMNA; may regulate nuclear envelope stability. Mg(2+) is required as a cofactor. Post-translationally, phosphorylated. Autophosphorylates. Phosphorylation by RAF1 may result in activation of DMPK. Proteolytic processing of the C-terminus may remove the transmembrane domain and release the kinase from membranes stimulating its activity. In terms of tissue distribution, most isoforms are expressed in many tissues including heart, skeletal muscle, liver and brain, except for isoform 2 which is only found in the heart and skeletal muscle, and isoform 14 which is only found in the brain, with high levels in the striatum, cerebellar cortex and pons.

It is found in the endoplasmic reticulum membrane. Its subcellular location is the nucleus outer membrane. It localises to the mitochondrion outer membrane. The protein resides in the sarcoplasmic reticulum membrane. The protein localises to the cell membrane. It is found in the cytoplasm. Its subcellular location is the cytosol. It localises to the mitochondrion membrane. It catalyses the reaction L-seryl-[protein] + ATP = O-phospho-L-seryl-[protein] + ADP + H(+). The catalysed reaction is L-threonyl-[protein] + ATP = O-phospho-L-threonyl-[protein] + ADP + H(+). With respect to regulation, coiled-coil-mediated oligomerization enhances the catalytic activity. Proteolytic processing of the C-terminus may release the protein from membranes and constitute a mean to regulate the enzyme. May be regulated by HSPB2, RAC1, RAF1 and G-protein second messengers. Non-receptor serine/threonine protein kinase which is necessary for the maintenance of skeletal muscle structure and function. May play a role in myocyte differentiation and survival by regulating the integrity of the nuclear envelope and the expression of muscle-specific genes. May also phosphorylate PPP1R12A and inhibit the myosin phosphatase activity to regulate myosin phosphorylation. Also critical to the modulation of cardiac contractility and to the maintenance of proper cardiac conduction activity probably through the regulation of cellular calcium homeostasis. Phosphorylates PLN, a regulator of calcium pumps and may regulate sarcoplasmic reticulum calcium uptake in myocytes. May also phosphorylate FXYD1/PLM which is able to induce chloride currents. May also play a role in synaptic plasticity. This chain is Myotonin-protein kinase (DMPK), found in Homo sapiens (Human).